We begin with the raw amino-acid sequence, 384 residues long: Calreticulin-3 (384 aa).

Positions 1-19 (MARALVQLWAICMLRVALA) are cleaved as a signal peptide. An N-domain region spans residues 20–197 (TVYFQEEFLD…GQSIESGSIE (178 aa)). N-linked (GlcNAc...) asparagine glycosylation is present at Asn-42. Cysteines 105 and 137 form a disulfide. Residues Tyr-109, Lys-111, Tyr-128, and Asp-135 each contribute to the an alpha-D-glucoside site. 7 consecutive repeat copies span residues 191-202 (IESGSIEYDWNL), 208-219 (ETSPAESKDWEQ), 221-230 (KDNKAQDWEK), 234-245 (DASTSKQSDWNG), 249-259 (GDWPAPMLQKP), 263-271 (DGLKPEGIH), and 273-283 (DVWLHRKMKNT). The 4 X approximate repeats stretch occupies residues 191–245 (IESGSIEYDWNLTSLKKETSPAESKDWEQTKDNKAQDWEKHFLDASTSKQSDWNG). The P-domain stretch occupies residues 198–294 (YDWNLTSLKK…YLTQYDLSEF (97 aa)). An N-linked (GlcNAc...) asparagine glycan is attached at Asn-201. Residues 249–283 (GDWPAPMLQKPPYQDGLKPEGIHKDVWLHRKMKNT) are 3 X approximate repeats. The tract at residues 295 to 384 (ENIGAIGLEL…FNQFHRRNEL (90 aa)) is C-domain. Glu-303 contributes to the an alpha-D-glucoside binding site. The short motif at 381–384 (RNEL) is the Prevents secretion from ER element.

The protein belongs to the calreticulin family. Component of an EIF2 complex at least composed of CELF1/CUGBP1, CALR, CALR3, EIF2S1, EIF2S2, HSP90B1 and HSPA5. In terms of tissue distribution, testis specific.

Its subcellular location is the endoplasmic reticulum lumen. During spermatogenesis, may act as a lectin-independent chaperone for specific client proteins such as ADAM3. Required for sperm fertility. CALR3 capacity for calcium-binding may be absent or much lower than that of CALR. The protein is Calreticulin-3 (CALR3) of Homo sapiens (Human).